The chain runs to 938 residues: AP-2 complex subunit alpha-2 (938 aa).

Residues 11–12 (RG), Lys43, Tyr53, and 57–61 (KYVCK) each bind a 1,2-diacyl-sn-glycero-3-phospho-(1D-myo-inositol-3,4,5-trisphosphate). Positions 615–681 (LKKKKGPSTV…TGPPPSSGGG (67 aa)) are disordered. A compositionally biased stretch (low complexity) spans 646–667 (PASTSAASTPSPSADLLGLGAV). Residues 668–677 (PPAPTGPPPS) show a composition bias toward pro residues.

It belongs to the adaptor complexes large subunit family. In terms of assembly, adaptor protein complex 2 (AP-2) is a heterotetramer composed of two large adaptins (alpha-type subunit AP2A1 or AP2A2 and beta-type subunit AP2B1), a medium adaptin (mu-type subunit AP2M1) and a small adaptin (sigma-type subunit AP2S1). Interacts with clathrin. Binds EPN1, EPS15, AMPH, SNAP91 and BIN1. Interacts with HIP1. Interacts with DGKD. Interacts with DENND1A, DENND1B and DENND1C. Interacts with FCHO1 and DAB2. Interacts with ATAT1; this interaction is required for efficient alpha-tubulin acetylation by ATAT1. Interacts with KIAA1107. Together with AP2B1 and AP2M1, it interacts with ADAM10; this interaction facilitates ADAM10 endocytosis from the plasma membrane during long-term potentiation in hippocampal neurons. Interacts with CLN3 (via dileucine motif). Interacts with ABCB11; this interaction regulates cell membrane expression of ABCB11 through its internalization in a clathrin-dependent manner and its subsequent degradation. Interacts with Cacfd1. Interacts with DNAJC6. In terms of tissue distribution, widely expressed.

The protein localises to the cell membrane. The protein resides in the membrane. It localises to the coated pit. Functionally, component of the adaptor protein complex 2 (AP-2). Adaptor protein complexes function in protein transport via transport vesicles in different membrane traffic pathways. Adaptor protein complexes are vesicle coat components and appear to be involved in cargo selection and vesicle formation. AP-2 is involved in clathrin-dependent endocytosis in which cargo proteins are incorporated into vesicles surrounded by clathrin (clathrin-coated vesicles, CCVs) which are destined for fusion with the early endosome. The clathrin lattice serves as a mechanical scaffold but is itself unable to bind directly to membrane components. Clathrin-associated adaptor protein (AP) complexes which can bind directly to both the clathrin lattice and to the lipid and protein components of membranes are considered to be the major clathrin adaptors contributing the CCV formation. AP-2 also serves as a cargo receptor to selectively sort the membrane proteins involved in receptor-mediated endocytosis. AP-2 seems to play a role in the recycling of synaptic vesicle membranes from the presynaptic surface. AP-2 recognizes Y-X-X-[FILMV] (Y-X-X-Phi) and [ED]-X-X-X-L-[LI] endocytosis signal motifs within the cytosolic tails of transmembrane cargo molecules. AP-2 may also play a role in maintaining normal post-endocytic trafficking through the ARF6-regulated, non-clathrin pathway. During long-term potentiation in hippocampal neurons, AP-2 is responsible for the endocytosis of ADAM10. The AP-2 alpha subunit binds polyphosphoinositide-containing lipids, positioning AP-2 on the membrane. The AP-2 alpha subunit acts via its C-terminal appendage domain as a scaffolding platform for endocytic accessory proteins. The AP-2 alpha and AP-2 sigma subunits are thought to contribute to the recognition of the [ED]-X-X-X-L-[LI] motif. This is AP-2 complex subunit alpha-2 from Rattus norvegicus (Rat).